A 168-amino-acid chain; its full sequence is Gremlin-2 (168 aa).

Residues M1–T21 form the signal peptide. N40 carries an N-linked (GlcNAc...) asparagine glycan. Disulfide bonds link C73–C123, C87–C137, C97–C155, and C101–C157. Positions C73–S163 constitute a CTCK domain. N-linked (GlcNAc...) asparagine glycosylation occurs at N161.

It belongs to the DAN family. In terms of assembly, homodimer. Interacts with BMP2, BMP4 and BMP7, but has lower affinity for BMP7 than for BMP2 and BMP4. Binds heparin; this impairs the interaction with BMP2. Post-translationally, N-glycosylated. In terms of tissue distribution, highly expressed in the ovary, followed by brain, spleen, colon, kidney and uterus. In ovary expressed in granulosa cells of selective early antral follicles.

It is found in the secreted. Cytokine that inhibits the activity of BMP2 and BMP4 in a dose-dependent manner, and thereby modulates signaling by BMP family members. Contributes to the regulation of embryonic morphogenesis via BMP family members. Antagonizes BMP4-induced suppression of progesterone production in granulosa cells. The polypeptide is Gremlin-2 (Grem2) (Mus musculus (Mouse)).